We begin with the raw amino-acid sequence, 739 residues long: Phosphoribosylformylglycinamidine synthase subunit PurL (739 aa).

Residue His54 is part of the active site. Tyr57 and Lys96 together coordinate ATP. Glu98 contacts Mg(2+). Substrate-binding positions include 99–102 (SHNH) and Arg121. His100 functions as the Proton acceptor in the catalytic mechanism. Asp122 is a binding site for Mg(2+). Substrate is bound at residue Gln245. Asp275 lines the Mg(2+) pocket. 319-321 (ESQ) lines the substrate pocket. Residues Asp504 and Gly541 each coordinate ATP. Residue Asn542 participates in Mg(2+) binding. Ser544 contributes to the substrate binding site.

It belongs to the FGAMS family. As to quaternary structure, monomer. Part of the FGAM synthase complex composed of 1 PurL, 1 PurQ and 2 PurS subunits.

The protein localises to the cytoplasm. The enzyme catalyses N(2)-formyl-N(1)-(5-phospho-beta-D-ribosyl)glycinamide + L-glutamine + ATP + H2O = 2-formamido-N(1)-(5-O-phospho-beta-D-ribosyl)acetamidine + L-glutamate + ADP + phosphate + H(+). It functions in the pathway purine metabolism; IMP biosynthesis via de novo pathway; 5-amino-1-(5-phospho-D-ribosyl)imidazole from N(2)-formyl-N(1)-(5-phospho-D-ribosyl)glycinamide: step 1/2. Part of the phosphoribosylformylglycinamidine synthase complex involved in the purines biosynthetic pathway. Catalyzes the ATP-dependent conversion of formylglycinamide ribonucleotide (FGAR) and glutamine to yield formylglycinamidine ribonucleotide (FGAM) and glutamate. The FGAM synthase complex is composed of three subunits. PurQ produces an ammonia molecule by converting glutamine to glutamate. PurL transfers the ammonia molecule to FGAR to form FGAM in an ATP-dependent manner. PurS interacts with PurQ and PurL and is thought to assist in the transfer of the ammonia molecule from PurQ to PurL. The chain is Phosphoribosylformylglycinamidine synthase subunit PurL from Lactococcus lactis subsp. cremoris (strain SK11).